Reading from the N-terminus, the 84-residue chain is Small ribosomal subunit protein uS17 (84 aa).

The protein belongs to the universal ribosomal protein uS17 family. In terms of assembly, part of the 30S ribosomal subunit.

Functionally, one of the primary rRNA binding proteins, it binds specifically to the 5'-end of 16S ribosomal RNA. This is Small ribosomal subunit protein uS17 from Thermoanaerobacter pseudethanolicus (strain ATCC 33223 / 39E) (Clostridium thermohydrosulfuricum).